The chain runs to 268 residues: MVLTKRIIPCLDLKDGRVVKGTHFVGLRDAGDPVELAQRYNEQGADEVVFLDITATREDRGTIIDVVQRAADQLFLPLTVGGGIRTIEDMKQILRAGADKVSINSSAVADPNLISQGAERFGTQCIVVAVDVRRNYETAPGKTPITLADGQECWYEVVTHGGSRGTGLDAVAWATEAEERGAGEILLTSMEADGTKEGFDIPITRAVSETVGIPVVASGGVGTLDHFYDGFTEGKADACLAASVFHYGEFTVRQVKEYLAGRGIPVRL.

Catalysis depends on residues Asp-12 and Asp-131.

This sequence belongs to the HisA/HisF family. As to quaternary structure, heterodimer of HisH and HisF.

Its subcellular location is the cytoplasm. It catalyses the reaction 5-[(5-phospho-1-deoxy-D-ribulos-1-ylimino)methylamino]-1-(5-phospho-beta-D-ribosyl)imidazole-4-carboxamide + L-glutamine = D-erythro-1-(imidazol-4-yl)glycerol 3-phosphate + 5-amino-1-(5-phospho-beta-D-ribosyl)imidazole-4-carboxamide + L-glutamate + H(+). Its pathway is amino-acid biosynthesis; L-histidine biosynthesis; L-histidine from 5-phospho-alpha-D-ribose 1-diphosphate: step 5/9. In terms of biological role, IGPS catalyzes the conversion of PRFAR and glutamine to IGP, AICAR and glutamate. The HisF subunit catalyzes the cyclization activity that produces IGP and AICAR from PRFAR using the ammonia provided by the HisH subunit. This chain is Imidazole glycerol phosphate synthase subunit HisF, found in Methanoculleus marisnigri (strain ATCC 35101 / DSM 1498 / JR1).